We begin with the raw amino-acid sequence, 110 residues long: Insulin (110 aa).

Residues 1–24 (MAPWTRLLPLLALLSLWIPAPTRA) form the signal peptide. Disulfide bonds link cysteine 31–cysteine 96, cysteine 43–cysteine 109, and cysteine 95–cysteine 100. Residues 57-87 (EAEDLQGKDAELGEAPGAGGLQPSALEAPLQ) constitute a propeptide, c peptide. The tract at residues 60–80 (DLQGKDAELGEAPGAGGLQPS) is disordered.

It belongs to the insulin family. Heterodimer of a B chain and an A chain linked by two disulfide bonds.

The protein resides in the secreted. Functionally, insulin decreases blood glucose concentration. It increases cell permeability to monosaccharides, amino acids and fatty acids. It accelerates glycolysis, the pentose phosphate cycle, and glycogen synthesis in liver. The chain is Insulin (INS) from Felis catus (Cat).